A 370-amino-acid chain; its full sequence is Ubiquitin carboxyl-terminal hydrolase 12-B (370 aa).

The 331-residue stretch at F39–R369 folds into the USP domain. Residue C48 is the Nucleophile of the active site. Residues K145–D168 are disordered. Over residues N155–N165 the composition is skewed to low complexity. Residues C186, C189, C233, and C236 each contribute to the Zn(2+) site. The active-site Proton acceptor is the H317.

This sequence belongs to the peptidase C19 family. USP12/USP46 subfamily. Interacts with WDR48.

It carries out the reaction Thiol-dependent hydrolysis of ester, thioester, amide, peptide and isopeptide bonds formed by the C-terminal Gly of ubiquitin (a 76-residue protein attached to proteins as an intracellular targeting signal).. Functionally, deubiquitinating enzyme. Has almost no deubiquitinating activity by itself and requires the interaction with wdr48 to have a high activity. The sequence is that of Ubiquitin carboxyl-terminal hydrolase 12-B (usp12-b) from Xenopus laevis (African clawed frog).